Reading from the N-terminus, the 280-residue chain is 4-diphosphocytidyl-2-C-methyl-D-erythritol kinase (280 aa).

Lys-11 is an active-site residue. 95 to 105 (PVGAGLGGGSS) is an ATP binding site. Asp-137 is an active-site residue.

This sequence belongs to the GHMP kinase family. IspE subfamily.

It catalyses the reaction 4-CDP-2-C-methyl-D-erythritol + ATP = 4-CDP-2-C-methyl-D-erythritol 2-phosphate + ADP + H(+). It participates in isoprenoid biosynthesis; isopentenyl diphosphate biosynthesis via DXP pathway; isopentenyl diphosphate from 1-deoxy-D-xylulose 5-phosphate: step 3/6. In terms of biological role, catalyzes the phosphorylation of the position 2 hydroxy group of 4-diphosphocytidyl-2C-methyl-D-erythritol. In Geobacter sp. (strain M21), this protein is 4-diphosphocytidyl-2-C-methyl-D-erythritol kinase.